A 320-amino-acid polypeptide reads, in one-letter code: Myoblast determination protein 1 (320 aa).

Residue methionine 1 forms a Peptide (Met-Gly) (interchain with G-Cter in ubiquitin) linkage. N6-methyllysine; by EHMT2 is present on lysine 104. The bHLH domain maps to 109–160 (DRRKAATMRERRRLSKVNEAFETLKRCTSSNPNQRLPKVEILRNAIRYIEGL). Disordered stretches follow at residues 174–219 (AAAA…PPSG) and 262–320 (ESPA…YQVL). 2 stretches are compositionally biased toward polar residues: residues 197-207 (SDASSPRSNCS) and 291-301 (GESSGDPTQSP).

As to quaternary structure, efficient DNA binding requires dimerization with another bHLH protein. Seems to form active heterodimers with ITF-2. Interacts with SUV39H1. Interacts with DDX5. Interacts with CHD2. Interacts with TSC22D3. Interacts with SETD3. Interacts with P-TEFB complex; promotes the transcriptional activity of MYOD1 through its CDK9-mediated phosphorylation. Interacts with CSRP3. Interacts with NUPR1. Phosphorylated by CDK9. This phosphorylation promotes its function in muscle differentiation. In terms of processing, acetylated by a complex containing EP300 and PCAF. The acetylation is essential to activate target genes. Conversely, its deacetylation by SIRT1 inhibits its function. Post-translationally, ubiquitinated on the N-terminus; which is required for proteasomal degradation. Methylation at Lys-104 by EHMT2/G9a inhibits myogenic activity.

It is found in the nucleus. Acts as a transcriptional activator that promotes transcription of muscle-specific target genes and plays a role in muscle differentiation. Together with MYF5 and MYOG, co-occupies muscle-specific gene promoter core region during myogenesis. Induces fibroblasts to differentiate into myoblasts. Interacts with and is inhibited by the twist protein. This interaction probably involves the basic domains of both proteins. The sequence is that of Myoblast determination protein 1 (MYOD1) from Homo sapiens (Human).